The chain runs to 442 residues: Chromosomal replication initiator protein DnaA (442 aa).

The tract at residues 1-75 is domain I, interacts with DnaA modulators; it reads MDAWPRCLER…GNGEVALAVG (75 aa). The domain II stretch occupies residues 75–104; the sequence is GSRPRAPEPLPAPQAVASAPAAAPIVPFAG. Positions 105-322 are domain III, AAA+ region; the sequence is NLDSHYTFAN…GALNTLVARA (218 aa). ATP contacts are provided by glycine 150, glycine 152, lysine 153, and threonine 154. The segment at 323 to 442 is domain IV, binds dsDNA; sequence NFTGRSITVE…WEKLIRKLSE (120 aa).

The protein belongs to the DnaA family. Oligomerizes as a right-handed, spiral filament on DNA at oriC.

The protein localises to the cytoplasm. Its function is as follows. Plays an essential role in the initiation and regulation of chromosomal replication. ATP-DnaA binds to the origin of replication (oriC) to initiate formation of the DNA replication initiation complex once per cell cycle. Binds the DnaA box (a 9 base pair repeat at the origin) and separates the double-stranded (ds)DNA. Forms a right-handed helical filament on oriC DNA; dsDNA binds to the exterior of the filament while single-stranded (ss)DNA is stabiized in the filament's interior. The ATP-DnaA-oriC complex binds and stabilizes one strand of the AT-rich DNA unwinding element (DUE), permitting loading of DNA polymerase. After initiation quickly degrades to an ADP-DnaA complex that is not apt for DNA replication. Binds acidic phospholipids. This Xanthomonas campestris pv. campestris (strain 8004) protein is Chromosomal replication initiator protein DnaA.